Here is a 214-residue protein sequence, read N- to C-terminus: Mediator of RNA polymerase II transcription subunit 29 (214 aa).

Residues 1–78 are disordered; the sequence is MMNQMGMHMQ…QQQSQQTEKV (78 aa). The span at 15-34 shows a compositional bias: gly residues; it reads VPGGPGGPVGMAGGPVGGVG. Residues 44–74 show a composition bias toward low complexity; it reads QMQQQQQVAAQQQQQQQQQQQAQAHQQQSQQ.

It belongs to the Mediator complex subunit 29 family. In terms of assembly, component of the Mediator complex.

It localises to the nucleus. Its function is as follows. Component of the Mediator complex, a coactivator involved in the regulated transcription of nearly all RNA polymerase II-dependent genes. Mediator functions as a bridge to convey information from gene-specific regulatory proteins to the basal RNA polymerase II transcription machinery. Mediator is recruited to promoters by direct interactions with regulatory proteins and serves as a scaffold for the assembly of a functional preinitiation complex with RNA polymerase II and the general transcription factors. The chain is Mediator of RNA polymerase II transcription subunit 29 (ix) from Aedes aegypti (Yellowfever mosquito).